Here is a 153-residue protein sequence, read N- to C-terminus: UPF0260 protein YcgN (153 aa).

Belongs to the UPF0260 family.

The polypeptide is UPF0260 protein YcgN (Salmonella dublin (strain CT_02021853)).